The primary structure comprises 663 residues: MIDKRDFKAFKLVSKYAPSGDQPQAIEALVDNIESGEKAQILLGATGTGKTYTMSQVISKVNKPTLVIAHNKTLAGQLYGEFKEFFPENAVEYFVSYYDYYQPEAYVPSSDTYIEKDSSVNDEIDKLRHSATSSLLERNDVIVVASVSCIYGLGSPKEYADSAVSLRPGQEISRDQLLNALVDIQFERNDIDFQRGRFRVRGDVVEVFPASRDEHAFRIEFFGDEIDRIREIESLTGKVLGDADHLVLFPATHFVTNDEHMEQSISKIQAELADQLKLFEAEGKLLEAQRLRQRTEYDIEMLREMGYTNGVENYSRHMDGRSAGEPPYTLLDFFPEDFLIMIDESHMTMGQIKGMYNGDKARKQMLVDYGFRLPSALDNRPLRREEFESHVHQIVYVSATPGDYEMEQTDTIVEQIIRPTGLLDPEVEVRPSMGQMDDLLGEINLRVERGERTFITTLTKKMAEDLTDYLKEMGVKVKYMHSDIKTLERTEIIRDLRLGVFDVLIGINLLREGIDVPEVSLVAILDADKEGFLRNERGLIQTIGRAARNADGHVIMYADRMTDSMQRAIDETARRRAIQMAYNEEHGIIPQTIKKDIRDLISISRAVEAKATEAETNYESMTRSERQEAIKQLQKNMQEAAELLDFELAAQLRDLILELKAID.

A Helicase ATP-binding domain is found at Asp31–Glu271. Gly44 to Thr51 contacts ATP. Positions Tyr97–Val120 match the Beta-hairpin motif. Residues Gln435–Ile601 form the Helicase C-terminal domain. The UVR domain occupies Gln627–Ile662.

The protein belongs to the UvrB family. Forms a heterotetramer with UvrA during the search for lesions. Interacts with UvrC in an incision complex.

It localises to the cytoplasm. The UvrABC repair system catalyzes the recognition and processing of DNA lesions. A damage recognition complex composed of 2 UvrA and 2 UvrB subunits scans DNA for abnormalities. Upon binding of the UvrA(2)B(2) complex to a putative damaged site, the DNA wraps around one UvrB monomer. DNA wrap is dependent on ATP binding by UvrB and probably causes local melting of the DNA helix, facilitating insertion of UvrB beta-hairpin between the DNA strands. Then UvrB probes one DNA strand for the presence of a lesion. If a lesion is found the UvrA subunits dissociate and the UvrB-DNA preincision complex is formed. This complex is subsequently bound by UvrC and the second UvrB is released. If no lesion is found, the DNA wraps around the other UvrB subunit that will check the other stand for damage. The sequence is that of UvrABC system protein B from Streptococcus equi subsp. zooepidemicus (strain MGCS10565).